We begin with the raw amino-acid sequence, 105 residues long: UPF0145 protein (105 aa).

It belongs to the UPF0145 family.

The chain is UPF0145 protein from Enterococcus faecalis (Streptococcus faecalis).